Consider the following 710-residue polypeptide: Pentatricopeptide repeat-containing protein At1g02060, chloroplastic (710 aa).

A chloroplast-targeting transit peptide spans 1–21 (MVSSVPKLHALFVSKSQPVLR). PPR repeat units lie at residues 137–171 (QDRY…GISP), 172–202 (SVLT…MRRT), 208–242 (DSYT…HCNP), 243–277 (DVVT…ATDV), 280–314 (NVVS…GLKP), 315–351 (NAVT…TFAP), 352–386 (DACT…KLHP), 387–421 (DSAS…EVLL), 429–459 (LAAA…LMKR), 463–497 (DPPS…EFVP), 498–532 (DLET…SYLP), and 533–567 (VATT…RIRQ).

Belongs to the PPR family. P subfamily.

Its subcellular location is the plastid. It is found in the chloroplast. The chain is Pentatricopeptide repeat-containing protein At1g02060, chloroplastic from Arabidopsis thaliana (Mouse-ear cress).